Consider the following 4540-residue polypeptide: Dynein heavy chain, cytoplasmic (4540 aa).

A stem region spans residues 1-1796 (MEESETQLNV…LIQMGNAQFH (1796 aa)). Coiled-coil stretches lie at residues 440–482 (EHIK…NVQQ), 698–722 (RVNY…KTKV), 794–827 (VKKF…AMKT), 975–995 (QQLI…MEQY), 1169–1251 (RSKK…LKMD), and 1295–1311 (QNKK…KQLN). 4 AAA regions span residues 1797–2018 (YGFE…VLNS), 2091–2348 (KELA…FTRI), 2457–2705 (EIDP…WKYA), and 2796–3056 (QFNE…AKRF). ATP is bound by residues 1835 to 1842 (GPAGTGKT), 2129 to 2136 (GPCGCGKS), 2496 to 2503 (GPPGSGKT), and 2834 to 2841 (GSSGVGKT). 4 coiled-coil regions span residues 3076 to 3182 (NEKK…NAKQ), 3289 to 3367 (QLKY…RSQA), 3653 to 3688 (EDEK…VMNT), and 3820 to 3851 (QQLK…RWLN). A stalk region spans residues 3076–3367 (NEKKSQLEDQ…VQEKVTRSQA (292 aa)). The disordered stretch occupies residues 3140 to 3159 (KKKEDSTRLSSDAEKKAKEM). An AAA 5 region spans residues 3444–3673 (LSRPSDRLNW…LKKEAAVIVQ (230 aa)). The interval 3908–4123 (ARKLINQILG…QRCSLDLIDE (216 aa)) is AAA 6. 2 coiled-coil regions span residues 4238-4259 (QKLI…TQIE) and 4313-4342 (RFLD…LAQG).

This sequence belongs to the dynein heavy chain family. In terms of assembly, consists of at least two heavy chains and a number of intermediate and light chains.

Its subcellular location is the cytoplasm. The protein localises to the cytoskeleton. In terms of biological role, cytoplasmic dynein acts as a motor for the intracellular retrograde motility of vesicles and organelles along microtubules. Dynein has ATPase activity; the force-producing power stroke is thought to occur on release of ADP. The chain is Dynein heavy chain, cytoplasmic (DHC-8) from Paramecium tetraurelia.